The primary structure comprises 290 residues: Nucleotide-binding protein XfasM23_0667 (290 aa).

Position 13 to 20 (glycine 13 to serine 20) interacts with ATP. Residue aspartate 65–serine 68 coordinates GTP.

The protein belongs to the RapZ-like family.

Displays ATPase and GTPase activities. This chain is Nucleotide-binding protein XfasM23_0667, found in Xylella fastidiosa (strain M23).